The primary structure comprises 82 residues: Small ribosomal subunit protein bS16 (82 aa).

It belongs to the bacterial ribosomal protein bS16 family.

In Francisella philomiragia subsp. philomiragia (strain ATCC 25017 / CCUG 19701 / FSC 153 / O#319-036), this protein is Small ribosomal subunit protein bS16.